The primary structure comprises 50 residues: Fungus-induced-related protein 15 (50 aa).

The N-terminal stretch at 1-21 (MNFYSLFVFIALIFSFNVVHG) is a signal peptide.

In terms of biological role, may have role in hypoxia response. In Caenorhabditis elegans, this protein is Fungus-induced-related protein 15 (fipr-15).